Here is a 166-residue protein sequence, read N- to C-terminus: Phosphopantetheine adenylyltransferase (166 aa).

Substrate is bound at residue Ser-11. ATP-binding positions include 11-12 (SF) and His-19. 3 residues coordinate substrate: Lys-43, Val-80, and Arg-94. Residues 95 to 97 (GLR), Glu-105, and 130 to 136 (VRTITAT) each bind ATP.

Belongs to the bacterial CoaD family. Homohexamer. The cofactor is Mg(2+).

Its subcellular location is the cytoplasm. The enzyme catalyses (R)-4'-phosphopantetheine + ATP + H(+) = 3'-dephospho-CoA + diphosphate. It participates in cofactor biosynthesis; coenzyme A biosynthesis; CoA from (R)-pantothenate: step 4/5. In terms of biological role, reversibly transfers an adenylyl group from ATP to 4'-phosphopantetheine, yielding dephospho-CoA (dPCoA) and pyrophosphate. The sequence is that of Phosphopantetheine adenylyltransferase from Mesorhizobium japonicum (strain LMG 29417 / CECT 9101 / MAFF 303099) (Mesorhizobium loti (strain MAFF 303099)).